Consider the following 333-residue polypeptide: E3 ubiquitin-protein ligase MIR1 (333 aa).

The segment at 1–60 (MEDEDVPVCWICNEELGNERFRACGCTGELENVHRSCLSTWLTISRNTACQICGVVYNTR) adopts an RING-CH-type zinc-finger fold. Topologically, residues 1–82 (MEDEDVPVCW…PRLTYQEGLE (82 aa)) are cytoplasmic. Zn(2+) is bound by residues Cys-9, Cys-12, Cys-24, Cys-26, His-34, Cys-37, Cys-50, and Cys-53. A helical transmembrane segment spans residues 83–103 (LIVFIFIMTLGAAGLAAATWV). Topologically, residues 104–121 (WLYIVGGHDPEIDHVAAA) are extracellular. A helical transmembrane segment spans residues 122 to 142 (AYYVFFVFYQLFVVFGLGAFF). At 143 to 333 (HMMRHVGRAY…SAVSSALMFH (191 aa)) the chain is on the cytoplasmic side. Positions 187-257 (GDNQDEEGPA…GRDDNVEPTA (71 aa)) are disordered. Residues 195–221 (PAGAAPGDQNGPAGAAPGDQDGPADGA) are compositionally biased toward low complexity. Basic and acidic residues predominate over residues 235–252 (AGYKEAGEPTHNDGRDDN).

Binds human MHC-I and CD1D.

The protein localises to the host cell membrane. The protein resides in the host endoplasmic reticulum. It catalyses the reaction [E2 ubiquitin-conjugating enzyme]-S-ubiquitinyl-L-cysteine + [acceptor protein]-L-cysteine = [E2 ubiquitin-conjugating enzyme]-L-cysteine + [acceptor protein]-S-ubiquitinyl-L-cysteine.. Its pathway is protein modification; protein ubiquitination. Membrane-bound E3 ubiquitin ligase expressed during late stages of lytic replication to mediate polyubiquitination of various host membrane proteins related to the immune response. Promotes ubiquitination and subsequent degradation of host MHC-I and CD1D molecules, DC-SIGN and DC-SIGNR, presumably to prevent lysis of infected cells by cytotoxic T-lymphocytes. Binds target molecules through transmembrane interaction. E3 ubiquitin-protein ligases accept ubiquitin from specific E2 ubiquitin-conjugating enzymes, and then transfer it to target protein. The result of this ubiquitination is the enhancement of the endocytosis of the target chain and the delivery to the lysosome, where it is proteolytically destroyed. Induces ubiquitination not only on lysines, but also on cysteine residues. The chain is E3 ubiquitin-protein ligase MIR1 (K3) from Human herpesvirus 8 type P (isolate GK18) (HHV-8).